The sequence spans 291 residues: MPMSSLISLFRQHYPQGSLCCDLLEIDRGLYIVQASITLEGIVVASALAAQSPLEAAEDLAKERAIASLDLTHISSTVPQSSPTAIVEDMEAKPSPPPSSPKKESKSPKQNHKVVTPPAIVNPTPVTPAHPPTPVVEKSPEVEAAIAPEPTLTPAPISFPPSPDPVLSLEEPTPPPAMVNSTFNQPEESAPIDSELQLDFATPELPLAVEAKPDSPEPDMAVSGATELPAGPMDFSEIIARSNLELKRLGWTSDQGRNYLLQTYGKRSRQLLSDEQLIEFLAYLEQQPDPN.

A disordered region spans residues 77-140; sequence TVPQSSPTAI…PPTPVVEKSP (64 aa). Pro residues predominate over residues 125-134; that stretch reads PVTPAHPPTP.

This is an uncharacterized protein from Synechocystis sp. (strain ATCC 27184 / PCC 6803 / Kazusa).